The following is a 308-amino-acid chain: Cell division protein ZipA (308 aa).

Residues 1 to 5 are Periplasmic-facing; it reads MQELR. Residues 6 to 26 traverse the membrane as a helical segment; the sequence is LVLILVGALAIAALLFHGLWT. The Cytoplasmic segment spans residues 27–308; it reads SRKETSSKFG…YKQRVKVFCN (282 aa). The disordered stretch occupies residues 43–90; the sequence is FDSESEDEQPTPARGFEQPKESVVDVRQERKEPAFGRDEPNLSQDPLF. Over residues 59–82 the composition is skewed to basic and acidic residues; the sequence is EQPKESVVDVRQERKEPAFGRDEP.

It belongs to the ZipA family. As to quaternary structure, interacts with FtsZ via their C-terminal domains.

Its subcellular location is the cell inner membrane. In terms of biological role, essential cell division protein that stabilizes the FtsZ protofilaments by cross-linking them and that serves as a cytoplasmic membrane anchor for the Z ring. Also required for the recruitment to the septal ring of downstream cell division proteins. The chain is Cell division protein ZipA from Aliivibrio salmonicida (strain LFI1238) (Vibrio salmonicida (strain LFI1238)).